Reading from the N-terminus, the 307-residue chain is Small ribosomal subunit protein uS2 (307 aa).

Residues 256-307 form a disordered region; sequence GGEAEQAAVDATGGAATEETPAAESTGAASEAAAVSEAAEPATEQPAADAEA. Low complexity predominate over residues 259-307; the sequence is AEQAAVDATGGAATEETPAAESTGAASEAAAVSEAAEPATEQPAADAEA.

Belongs to the universal ribosomal protein uS2 family.

The protein is Small ribosomal subunit protein uS2 of Nocardioides sp. (strain ATCC BAA-499 / JS614).